The following is a 211-amino-acid chain: Large ribosomal subunit protein uL4 (211 aa).

Residues 48 to 89 (KRAGTASTKTRVEVRGGGAKPWRQKGTGRARAGSRTSPLWRG) form a disordered region.

Belongs to the universal ribosomal protein uL4 family. Part of the 50S ribosomal subunit.

In terms of biological role, one of the primary rRNA binding proteins, this protein initially binds near the 5'-end of the 23S rRNA. It is important during the early stages of 50S assembly. It makes multiple contacts with different domains of the 23S rRNA in the assembled 50S subunit and ribosome. Forms part of the polypeptide exit tunnel. This Desulfotalea psychrophila (strain LSv54 / DSM 12343) protein is Large ribosomal subunit protein uL4.